We begin with the raw amino-acid sequence, 219 residues long: Protein RhiB (219 aa).

Positions A174–P195 are enriched in polar residues. The disordered stretch occupies residues A174–T201.

In terms of biological role, may be involved in plant-microbe interaction. In Rhizobium leguminosarum bv. viciae, this protein is Protein RhiB (rhiB).